The chain runs to 94 residues: Selenoprotein K (94 aa).

A helical membrane pass occupies residues leucine 20–leucine 42. The interval lysine 47–arginine 94 is disordered. Residue selenocysteine 92 is a non-standard amino acid, selenocysteine.

Belongs to the selenoprotein K family. In terms of assembly, interacts with DERL1, DERL2, DERL3 and SELENOS. The SELENOK-SELENOS complex interacts with VCP. Interacts with ZDHHC6. Cleaved by CAPN2/m-calpain in resting macrophages but not in activated macrophages. Macrophage activation up-regulates expression of the calpain inhibitor CAST/calpastatin, resulting in inhibition of CAPN2 activity. In terms of processing, truncated SELENOK proteins produced by failed UGA/Sec decoding are ubiquitinated by the CRL2(KLHDC2) complex, which recognizes the diglycine (Gly-Gly) at the C-terminus of truncated SELENOK proteins.

Its subcellular location is the endoplasmic reticulum membrane. The protein localises to the cell membrane. Required for Ca(2+) flux in immune cells and plays a role in T-cell proliferation and in T-cell and neutrophil migration. Involved in endoplasmic reticulum-associated degradation (ERAD) of soluble glycosylated proteins. Required for palmitoylation and cell surface expression of CD36 and involved in macrophage uptake of low-density lipoprotein and in foam cell formation. Together with ZDHHC6, required for palmitoylation of ITPR1 in immune cells, leading to regulate ITPR1 stability and function. Plays a role in protection of cells from ER stress-induced apoptosis. Protects cells from oxidative stress when overexpressed in cardiomyocytes. This Chinchilla lanigera (Long-tailed chinchilla) protein is Selenoprotein K.